Reading from the N-terminus, the 172-residue chain is DCC family protein At1g52590, chloroplastic (172 aa).

Residues 1 to 25 (MAILIPASFGRLTITSRAQVRVRVS) constitute a chloroplast transit peptide.

Belongs to the DCC thiol-disulfide oxidoreductase family.

It is found in the plastid. It localises to the chloroplast. The protein is DCC family protein At1g52590, chloroplastic of Arabidopsis thaliana (Mouse-ear cress).